We begin with the raw amino-acid sequence, 212 residues long: Probable GTP-binding protein EngB (212 aa).

An EngB-type G domain is found at 25–199 (FGYEVAFAGR…WAKLDEWMEY (175 aa)). GTP-binding positions include 33 to 40 (GRSNAGKS), 60 to 64 (GRTQL), 78 to 81 (DLPG), 145 to 148 (TKSD), and 178 to 180 (FSS). Positions 40 and 62 each coordinate Mg(2+).

Belongs to the TRAFAC class TrmE-Era-EngA-EngB-Septin-like GTPase superfamily. EngB GTPase family. Requires Mg(2+) as cofactor.

Its function is as follows. Necessary for normal cell division and for the maintenance of normal septation. This chain is Probable GTP-binding protein EngB, found in Hydrogenovibrio crunogenus (strain DSM 25203 / XCL-2) (Thiomicrospira crunogena).